A 198-amino-acid chain; its full sequence is Endothelin-3 (198 aa).

The N-terminal stretch at 1–16 (MEPGLWLLFGLTVTSA) is a signal peptide. A propeptide spanning residues 17-86 (AGLVPCPQPG…SKGGPVHGRA (70 aa)) is cleaved from the precursor. The tract at residues 22–79 (CPQPGDAGKSGVPGTPPTARSEGDIQEPVAMTAVQGPSPRSPEQEQELGRFGEQASKG) is disordered. 2 disulfides stabilise this stretch: Cys-89/Cys-103 and Cys-91/Cys-99. A propeptide spanning residues 110–198 (INTPEQTVPY…RGNGGLRPTR (89 aa)) is cleaved from the precursor. An endothelin-like region spans residues 150 to 164 (CACVQSQDSACLHFC). The tract at residues 174 to 198 (SRTATNPDKEEEPASRGNGGLRPTR) is disordered.

Belongs to the endothelin/sarafotoxin family. Expressed in which included heart, lung, liver, kidney, spleen, stomach, pancreas, duodenum, colon, uterus, ovary and testis.

The protein resides in the secreted. Its function is as follows. Endothelins are endothelium-derived vasoconstrictor peptides. In Canis lupus familiaris (Dog), this protein is Endothelin-3 (EDN3).